Consider the following 372-residue polypeptide: N-methyl-L-tryptophan oxidase (372 aa).

4 to 34 (DLIIIGSGSVGAAAGYYATRAGLNVLMTDAH) contacts FAD. Cysteine 308 bears the S-8alpha-FAD cysteine mark.

It belongs to the MSOX/MTOX family. MTOX subfamily. Monomer. FAD is required as a cofactor.

It catalyses the reaction N(alpha)-methyl-L-tryptophan + O2 + H2O = L-tryptophan + formaldehyde + H2O2. Catalyzes the oxidative demethylation of N-methyl-L-tryptophan. The chain is N-methyl-L-tryptophan oxidase from Escherichia coli (strain SMS-3-5 / SECEC).